The following is a 127-amino-acid chain: Calcitonin receptor-stimulating peptide 2 (127 aa).

The N-terminal stretch at 1–25 (MGFWKLSPFLAIGLLVMYQAGILQA) is a signal peptide. Residues 26–81 (APFRSALENPLESATLTEDEICVLLTAVVKDYVQMKARELQQEQETEGSSLTAQKS) constitute a propeptide that is removed on maturation. Positions 65–85 (LQQEQETEGSSLTAQKSSCKD) are disordered. Residues 72–81 (EGSSLTAQKS) are compositionally biased toward polar residues. The cysteines at positions 83 and 88 are disulfide-linked.

The protein belongs to the calcitonin family.

It localises to the secreted. The sequence is that of Calcitonin receptor-stimulating peptide 2 (CRSP2) from Canis lupus familiaris (Dog).